We begin with the raw amino-acid sequence, 144 residues long: Large ribosomal subunit protein uL15 (144 aa).

Residues 1–10 (MYLNTISPSR) show a composition bias toward polar residues. Residues 1 to 51 (MYLNTISPSRGSKHLSKRVGRGIGSGLGKTGGRGHKGQKSRSGGKVRLGFE) are disordered. The segment covering 11–20 (GSKHLSKRVG) has biased composition (basic residues). Residues 21–31 (RGIGSGLGKTG) show a composition bias toward gly residues. Residues 32 to 44 (GRGHKGQKSRSGG) show a composition bias toward basic residues.

Belongs to the universal ribosomal protein uL15 family. In terms of assembly, part of the 50S ribosomal subunit.

In terms of biological role, binds to the 23S rRNA. The polypeptide is Large ribosomal subunit protein uL15 (Blochmanniella pennsylvanica (strain BPEN)).